The sequence spans 189 residues: Large ribosomal subunit protein bL9 (189 aa).

This sequence belongs to the bacterial ribosomal protein bL9 family.

Its function is as follows. Binds to the 23S rRNA. This Brucella abortus (strain S19) protein is Large ribosomal subunit protein bL9.